The primary structure comprises 251 residues: 1-(5-phosphoribosyl)-5-[(5-phosphoribosylamino)methylideneamino] imidazole-4-carboxamide isomerase (251 aa).

The active-site Proton acceptor is Asp8. Asp131 functions as the Proton donor in the catalytic mechanism.

It belongs to the HisA/HisF family.

Its subcellular location is the cytoplasm. It catalyses the reaction 1-(5-phospho-beta-D-ribosyl)-5-[(5-phospho-beta-D-ribosylamino)methylideneamino]imidazole-4-carboxamide = 5-[(5-phospho-1-deoxy-D-ribulos-1-ylimino)methylamino]-1-(5-phospho-beta-D-ribosyl)imidazole-4-carboxamide. The protein operates within amino-acid biosynthesis; L-histidine biosynthesis; L-histidine from 5-phospho-alpha-D-ribose 1-diphosphate: step 4/9. In Burkholderia thailandensis (strain ATCC 700388 / DSM 13276 / CCUG 48851 / CIP 106301 / E264), this protein is 1-(5-phosphoribosyl)-5-[(5-phosphoribosylamino)methylideneamino] imidazole-4-carboxamide isomerase.